Reading from the N-terminus, the 590-residue chain is Leucine-rich repeat transmembrane neuronal protein 4 (590 aa).

The N-terminal stretch at 1–30 is a signal peptide; that stretch reads MGFHLITQLKGMSVVLVLLPTLLLVMLTGA. The region spanning 31 to 61 is the LRRNT domain; it reads QRACPKNCRCDGKIVYCESHAFADIPENISG. Over 31-424 the chain is Extracellular; the sequence is QRACPKNCRC…QEYEHVSFHK (394 aa). Asn-58 is a glycosylation site (N-linked (GlcNAc...) asparagine). LRR repeat units follow at residues 62–83, 86–107, 110–131, 134–155, 158–179, 182–203, 206–226, 230–251, 254–275, and 278–299; these read GSQG…QFAG, QLIW…AFQG, RLKE…TFHP, NLRN…QFKG, KLII…VFQD, NLDF…AFAG, KLKE…AHFP, NLRS…LTWT, SLHN…TFKC, and NLQK…TVNA. Asn-126 is a glycosylation site (N-linked (GlcNAc...) asparagine). Asn-291 carries an N-linked (GlcNAc...) asparagine glycan. An LRRCT domain is found at 311–362; that stretch reads NMWECSRSICPLFYWLKNFKGNKESTMICAGPKHIQGEKVSDAVETYNICSE. The helical transmembrane segment at 425–445 threads the bilayer; it reads IIAGSVALFLSVAMILLVIYV. Residues 446–590 lie on the Cytoplasmic side of the membrane; it reads SWKRYPASMK…PAIYLERIAN (145 aa).

The protein belongs to the LRRTM family. As to quaternary structure, peripherally associated with AMPAR complex. AMPAR complex consists of an inner core made of 4 pore-forming GluA/GRIA proteins (GRIA1, GRIA2, GRIA3 and GRIA4) and 4 major auxiliary subunits arranged in a twofold symmetry. One of the two pairs of distinct binding sites is occupied either by CNIH2, CNIH3 or CACNG2, CACNG3. The other harbors CACNG2, CACNG3, CACNG4, CACNG8 or GSG1L. This inner core of AMPAR complex is complemented by outer core constituents binding directly to the GluA/GRIA proteins at sites distinct from the interaction sites of the inner core constituents. Outer core constituents include at least PRRT1, PRRT2, CKAMP44/SHISA9, FRRS1L and NRN1. The proteins of the inner and outer core serve as a platform for other, more peripherally associated AMPAR constituents, including LRRTM4. Alone or in combination, these auxiliary subunits control the gating and pharmacology of the AMPAR complex and profoundly impact their biogenesis and protein processing. Expressed in neuronal tissues.

It is found in the cell membrane. The protein resides in the postsynaptic cell membrane. May play a role in the development and maintenance of the vertebrate nervous system. Exhibits strong synaptogenic activity, restricted to excitatory presynaptic differentiation. The protein is Leucine-rich repeat transmembrane neuronal protein 4 (LRRTM4) of Homo sapiens (Human).